A 210-amino-acid chain; its full sequence is DNA-directed RNA polymerase subunit 5-like protein 1 (210 aa).

It belongs to the archaeal Rpo5/eukaryotic RPB5 RNA polymerase subunit family.

The protein resides in the nucleus. The protein is DNA-directed RNA polymerase subunit 5-like protein 1 (NRPB5L1) of Arabidopsis thaliana (Mouse-ear cress).